Consider the following 464-residue polypeptide: NADH-ubiquinone oxidoreductase chain 4 (464 aa).

A run of 13 helical transmembrane segments spans residues 1 to 21 (MMIT…VIPQ), 63 to 83 (SISA…LIAS), 98 to 118 (FIII…ALEL), 119 to 139 (LLFY…ITRW), 152 to 172 (FMFY…AIYI), 197 to 217 (IWWA…GFHL), 227 to 247 (PVAG…YGLI), 261 to 281 (LSLA…IICV), 288 to 308 (ALIA…IFSS), 314 to 334 (NGAL…FSLA), 355 to 375 (ILPL…GLPP), 389 to 409 (LIAW…FGAI), and 443 to 463 (LHTL…ITWL).

The protein belongs to the complex I subunit 4 family.

Its subcellular location is the mitochondrion membrane. It carries out the reaction a ubiquinone + NADH + 5 H(+)(in) = a ubiquinol + NAD(+) + 4 H(+)(out). Its function is as follows. Core subunit of the mitochondrial membrane respiratory chain NADH dehydrogenase (Complex I) that is believed to belong to the minimal assembly required for catalysis. Complex I functions in the transfer of electrons from NADH to the respiratory chain. The immediate electron acceptor for the enzyme is believed to be ubiquinone. In Paracentrotus lividus (Common sea urchin), this protein is NADH-ubiquinone oxidoreductase chain 4 (ND4).